The sequence spans 504 residues: Anaerobic nitric oxide reductase transcription regulator NorR (504 aa).

Asp57 is subject to 4-aspartylphosphate. A Sigma-54 factor interaction domain is found at 187-416 (MIGLSPGMTQ…LEHAIHRAVV (230 aa)). Residues 215–222 (GETGTGKE) and 278–287 (ADNGTLFLDE) each bind ATP. The H-T-H motif DNA-binding region spans 479–498 (WAACARMLETDVANLHRLAK).

It functions in the pathway nitrogen metabolism; nitric oxide reduction. In terms of biological role, required for the expression of anaerobic nitric oxide (NO) reductase, acts as a transcriptional activator for at least the norVW operon. Activation also requires sigma-54. This Shigella sonnei (strain Ss046) protein is Anaerobic nitric oxide reductase transcription regulator NorR.